Reading from the N-terminus, the 319-residue chain is Cytochrome f (319 aa).

The signal sequence occupies residues 1 to 34 (MQNRNTYEWAKKMTRLISVLVMIHIITRTSISNA). Heme-binding residues include Tyr35, Cys55, Cys58, and His59. The chain crosses the membrane as a helical span at residues 287 to 304 (GLLLFLASVILAQIFLVL).

The protein belongs to the cytochrome f family. As to quaternary structure, the 4 large subunits of the cytochrome b6-f complex are cytochrome b6, subunit IV (17 kDa polypeptide, petD), cytochrome f and the Rieske protein, while the 4 small subunits are PetG, PetL, PetM and PetN. The complex functions as a dimer. It depends on heme as a cofactor.

It is found in the plastid. Its subcellular location is the chloroplast thylakoid membrane. Its function is as follows. Component of the cytochrome b6-f complex, which mediates electron transfer between photosystem II (PSII) and photosystem I (PSI), cyclic electron flow around PSI, and state transitions. The protein is Cytochrome f (petA) of Pinus thunbergii (Japanese black pine).